The chain runs to 382 residues: Gap junction alpha-1 protein (382 aa).

Over 2–23 (GDWSALGKLLDKVQAYSTAGGK) the chain is Cytoplasmic. Ser5 carries the post-translational modification Phosphoserine. The helical transmembrane segment at 24 to 44 (VWLSVLFIFRILLLGTAVESA) threads the bilayer. Residues 45–76 (WGDEQSAFRCNTQQPGCENVCYDKSFPISHVR) lie on the Extracellular side of the membrane. 2 disulfide bridges follow: Cys54–Cys192 and Cys187–Cys198. The helical transmembrane segment at 77–97 (FWVLQIIFVSVPTLLYLAHVF) threads the bilayer. At 98 to 155 (YVMRKEEKLNKKEEELKVAQTDGANVDMHLKQIEIKKFKYGIEEHGKVKMRGGLLRTY) the chain is on the cytoplasmic side. Lys144 participates in a covalent cross-link: Glycyl lysine isopeptide (Lys-Gly) (interchain with G-Cter in SUMO). A helical transmembrane segment spans residues 156-176 (IISILFKSVFEVAFLLIQWYI). Residues 177–207 (YGFSLSAVYTCKRDPCPHQVDCFLSRPTEKT) lie on the Extracellular side of the membrane. The helical transmembrane segment at 208–228 (IFIIFMLVVSLVSLALNIIEL) threads the bilayer. The Cytoplasmic portion of the chain corresponds to 229–382 (FYVFFKGIKD…SRPRPDDLEI (154 aa)). Lys237 is covalently cross-linked (Glycyl lysine isopeptide (Lys-Gly) (interchain with G-Cter in SUMO)). Residues 244–382 (SDLYHATTGP…SRPRPDDLEI (139 aa)) form an interaction with NOV region. The residue at position 247 (Tyr247) is a Phosphotyrosine. Phosphoserine is present on residues Ser255, Ser257, and Ser262. Residues 264 to 382 (TYAYFNGCSS…SRPRPDDLEI (119 aa)) are interaction with UBQLN4. Cys271 is subject to S-nitrosocysteine. Thr275 carries the post-translational modification Phosphothreonine. Ser306 and Ser314 each carry phosphoserine. A compositionally biased stretch (polar residues) spans 317–332 (QNRMGQAGSTISNSHA). The interval 317-382 (QNRMGQAGST…SRPRPDDLEI (66 aa)) is disordered. Residue Ser325 is modified to Phosphoserine; by CK1. At Thr326 the chain carries Phosphothreonine. Residues Ser328 and Ser330 each carry the phosphoserine; by CK1 modification. Ser344 and Ser365 each carry phosphoserine. Low complexity predominate over residues 362 to 374 (RPSSRASSRASSR). Phosphoserine; by PKC/PRKCG and PKC/PRKCD is present on Ser368. Phosphoserine is present on residues Ser369 and Ser373.

The protein belongs to the connexin family. Alpha-type (group II) subfamily. As to quaternary structure, a connexon is composed of a hexamer of connexins. Interacts with SGSM3. Interacts with RIC1/CIP150. Interacts with CNST and CSNK1D. Interacts (via C-terminus) with TJP1. Interacts (via C-terminus) with SRC (via SH3 domain). Interacts (not ubiquitinated) with UBQLN4 (via UBA domain). Interacts with NOV. Interacts with TMEM65. Interacts with ANK3/ANKG and PKP2. In terms of processing, phosphorylation at Ser-325, Ser-328 and Ser-330 by CK1 modulates gap junction assembly. Phosphorylated at Ser-368 by PRKCG; phosphorylation induces disassembly of gap junction plaques and inhibition of gap junction activity. Phosphorylation at Ser-368 by PRKCD triggers its internalization into small vesicles leading to proteasome-mediated degradation. Sumoylated with SUMO1, SUMO2 and SUMO3, which may regulate the level of functional Cx43 gap junctions at the plasma membrane. May be desumoylated by SENP1 or SENP2. Post-translationally, S-nitrosylation at Cys-271 is enriched at the muscle endothelial gap junction in arteries, it augments channel permeability and may regulate of smooth muscle cell to endothelial cell communication. In terms of processing, acetylated in the developing cortex; leading to delocalization from the cell membrane.

It localises to the cell membrane. The protein resides in the cell junction. The protein localises to the gap junction. It is found in the endoplasmic reticulum. In terms of biological role, gap junction protein that acts as a regulator of bladder capacity. A gap junction consists of a cluster of closely packed pairs of transmembrane channels, the connexons, through which materials of low MW diffuse from one cell to a neighboring cell. May play a critical role in the physiology of hearing by participating in the recycling of potassium to the cochlear endolymph. Negative regulator of bladder functional capacity: acts by enhancing intercellular electrical and chemical transmission, thus sensitizing bladder muscles to cholinergic neural stimuli and causing them to contract. May play a role in cell growth inhibition through the regulation of NOV expression and localization. Plays an essential role in gap junction communication in the ventricles. This chain is Gap junction alpha-1 protein (GJA1), found in Erinaceus europaeus (Western European hedgehog).